The following is a 208-amino-acid chain: Flavin-dependent thymidylate synthase (208 aa).

One can recognise a ThyX domain in the interval 1 to 208; sequence MEVICKHYTP…QYLFEDCLKH (208 aa). Residues S50 and 74–76 contribute to the FAD site; that span reads RHR. DUMP contacts are provided by residues 71–74, 84–86, and K147; these read ELSR and SSR. The ThyX motif motif lies at 74 to 84; it reads RHRIASLSVKS. FAD contacts are provided by residues 163–165 and N169; that span reads NAR. Residue R174 participates in dUMP binding. R174 serves as the catalytic Involved in ionization of N3 of dUMP, leading to its activation.

Belongs to the thymidylate synthase ThyX family. In terms of assembly, homotetramer. FAD is required as a cofactor.

The catalysed reaction is dUMP + (6R)-5,10-methylene-5,6,7,8-tetrahydrofolate + NADPH + H(+) = dTMP + (6S)-5,6,7,8-tetrahydrofolate + NADP(+). Its pathway is pyrimidine metabolism; dTTP biosynthesis. Its function is as follows. Catalyzes the reductive methylation of 2'-deoxyuridine-5'-monophosphate (dUMP) to 2'-deoxythymidine-5'-monophosphate (dTMP) while utilizing 5,10-methylenetetrahydrofolate (mTHF) as the methyl donor, and NAD(P)H and FADH(2) as the reductant. The protein is Flavin-dependent thymidylate synthase of Helicobacter pylori (strain ATCC 700392 / 26695) (Campylobacter pylori).